The chain runs to 170 residues: N-alpha-acetyltransferase 50 (170 aa).

The N-acetyltransferase domain maps to 6-155 (IELGDVTPHN…DAHVLQKNLK (150 aa)). A substrate-binding site is contributed by tyrosine 31. Tyrosine 73 is an active-site residue. Residue methionine 75 coordinates substrate. 77–90 (LGCLAPYRRLGIGT) contributes to the acetyl-CoA binding site. Position 79–90 (79–90 (CLAPYRRLGIGT)) interacts with CoA. Histidine 112 is an active-site residue. 117-126 (NESAIDFYRK) contacts CoA. Residues 138–141 (YYKR) form a substrate region.

This sequence belongs to the acetyltransferase family. GNAT subfamily.

The protein resides in the cytoplasm. It is found in the nucleus. It carries out the reaction N-terminal L-methionyl-L-alanyl-[protein] + acetyl-CoA = N-terminal N(alpha)-acetyl-L-methionyl-L-alanyl-[protein] + CoA + H(+). It catalyses the reaction N-terminal L-methionyl-L-seryl-[protein] + acetyl-CoA = N-terminal N(alpha)-acetyl-L-methionyl-L-seryl-[protein] + CoA + H(+). The enzyme catalyses N-terminal L-methionyl-L-valyl-[protein] + acetyl-CoA = N-terminal N(alpha)-acetyl-L-methionyl-L-valyl-[protein] + CoA + H(+). The catalysed reaction is N-terminal L-methionyl-L-threonyl-[protein] + acetyl-CoA = N-terminal N(alpha)-acetyl-L-methionyl-L-threonyl-[protein] + CoA + H(+). It carries out the reaction N-terminal L-methionyl-L-lysyl-[protein] + acetyl-CoA = N-terminal N(alpha)-acetyl-L-methionyl-L-lysyl-[protein] + CoA + H(+). It catalyses the reaction N-terminal L-methionyl-L-leucyl-[protein] + acetyl-CoA = N-terminal N(alpha)-acetyl-L-methionyl-L-leucyl-[protein] + CoA + H(+). The enzyme catalyses N-terminal L-methionyl-L-phenylalanyl-[protein] + acetyl-CoA = N-terminal N(alpha)-acetyl-L-methionyl-L-phenylalanyl-[protein] + CoA + H(+). The catalysed reaction is N-terminal L-methionyl-L-tyrosyl-[protein] + acetyl-CoA = N-terminal N(alpha)-acetyl-L-methionyl-L-tyrosyl-[protein] + CoA + H(+). Functionally, N-alpha-acetyltransferase that acetylates the N-terminus of proteins that retain their initiating methionine. Has a broad substrate specificity: able to acetylate the initiator methionine of most peptides, except for those with a proline in second position. Also displays N-epsilon-acetyltransferase activity by mediating acetylation of the side chain of specific lysines on proteins. The relevance of N-epsilon-acetyltransferase activity is however unclear. Required for sister chromatid cohesion during mitosis by promoting binding of CDCA5/sororin to cohesin. The polypeptide is N-alpha-acetyltransferase 50 (naa50) (Xenopus laevis (African clawed frog)).